A 255-amino-acid chain; its full sequence is tRNA (guanine-N(7)-)-methyltransferase (255 aa).

The S-adenosyl-L-methionine site is built by Glu86, Glu111, Asp138, and Asp161. Asp161 is an active-site residue. Substrate is bound by residues Lys165, Asp197, and Thr234–Glu237.

Belongs to the class I-like SAM-binding methyltransferase superfamily. TrmB family.

The catalysed reaction is guanosine(46) in tRNA + S-adenosyl-L-methionine = N(7)-methylguanosine(46) in tRNA + S-adenosyl-L-homocysteine. The protein operates within tRNA modification; N(7)-methylguanine-tRNA biosynthesis. In terms of biological role, catalyzes the formation of N(7)-methylguanine at position 46 (m7G46) in tRNA. The chain is tRNA (guanine-N(7)-)-methyltransferase from Pasteurella multocida (strain Pm70).